A 151-amino-acid chain; its full sequence is Gene 55 protein (151 aa).

This chain is Gene 55 protein (55), found in Mycobacterium phage D29 (Mycobacteriophage D29).